We begin with the raw amino-acid sequence, 329 residues long: tRNA N6-adenosine threonylcarbamoyltransferase (329 aa).

Fe cation contacts are provided by histidine 110 and histidine 114. Residues valine 132 to glycine 136, aspartate 165, glycine 178, and asparagine 271 contribute to the substrate site. A Fe cation-binding site is contributed by aspartate 299.

This sequence belongs to the KAE1 / TsaD family. Fe(2+) is required as a cofactor.

Its subcellular location is the cytoplasm. The catalysed reaction is L-threonylcarbamoyladenylate + adenosine(37) in tRNA = N(6)-L-threonylcarbamoyladenosine(37) in tRNA + AMP + H(+). In terms of biological role, required for the formation of a threonylcarbamoyl group on adenosine at position 37 (t(6)A37) in tRNAs that read codons beginning with adenine. Is involved in the transfer of the threonylcarbamoyl moiety of threonylcarbamoyl-AMP (TC-AMP) to the N6 group of A37, together with TsaE and TsaB. TsaD likely plays a direct catalytic role in this reaction. This is tRNA N6-adenosine threonylcarbamoyltransferase from Neorickettsia sennetsu (strain ATCC VR-367 / Miyayama) (Ehrlichia sennetsu).